The primary structure comprises 408 residues: LL-diaminopimelate aminotransferase (408 aa).

2 residues coordinate substrate: Tyr-15 and Gly-42. Residues Tyr-72, 108-109 (SK), Tyr-132, Asn-187, Tyr-218, and 246-248 (SFS) contribute to the pyridoxal 5'-phosphate site. The substrate site is built by Lys-109, Tyr-132, and Asn-187. Lys-249 bears the N6-(pyridoxal phosphate)lysine mark. Arg-257 and Asn-292 together coordinate pyridoxal 5'-phosphate. Substrate is bound by residues Asn-292 and Arg-388.

Belongs to the class-I pyridoxal-phosphate-dependent aminotransferase family. LL-diaminopimelate aminotransferase subfamily. Homodimer. Requires pyridoxal 5'-phosphate as cofactor.

It carries out the reaction (2S,6S)-2,6-diaminopimelate + 2-oxoglutarate = (S)-2,3,4,5-tetrahydrodipicolinate + L-glutamate + H2O + H(+). Its pathway is amino-acid biosynthesis; L-lysine biosynthesis via DAP pathway; LL-2,6-diaminopimelate from (S)-tetrahydrodipicolinate (aminotransferase route): step 1/1. Its function is as follows. Involved in the synthesis of meso-diaminopimelate (m-DAP or DL-DAP), required for both lysine and peptidoglycan biosynthesis. Catalyzes the direct conversion of tetrahydrodipicolinate to LL-diaminopimelate. This is LL-diaminopimelate aminotransferase from Prochlorococcus marinus (strain SARG / CCMP1375 / SS120).